A 282-amino-acid chain; its full sequence is Probable aquaporin PIP2-6 (282 aa).

The next 2 helical transmembrane spans lie at 39–59 (ALIA…ATVI) and 76–96 (LGIA…TAGI). The short motif at 102–104 (NPA) is the NPA 1 element. The next 3 membrane-spanning stretches (helical) occupy residues 121–141 (VMYI…VKGI), 163–183 (GTAL…VFSA), and 197–217 (VLAP…TIPI). The short motif at 223–225 (NPA) is the NPA 2 element. A helical transmembrane segment spans residues 245-265 (IFWAGPFIGALAAAAYHQYIL).

The protein belongs to the MIP/aquaporin (TC 1.A.8) family. PIP (TC 1.A.8.11) subfamily. In terms of tissue distribution, expressed in roots and leaves.

Its subcellular location is the cell membrane. Aquaporins facilitate the transport of water and small neutral solutes across cell membranes. The chain is Probable aquaporin PIP2-6 (PIP2-6) from Oryza sativa subsp. japonica (Rice).